The primary structure comprises 84 residues: Acetylcholine receptor subunit alpha (84 aa).

Intrachain disulfides connect cysteine 7–cysteine 21 and cysteine 71–cysteine 72. A glycan (N-linked (GlcNAc...) asparagine) is linked at asparagine 20.

This sequence belongs to the ligand-gated ion channel (TC 1.A.9) family. Acetylcholine receptor (TC 1.A.9.1) subfamily. Alpha-1/CHRNA1 sub-subfamily. In terms of assembly, one of the alpha chains that assemble within the acetylcholine receptor, a pentamer of two alpha chains, a beta, a delta, and a gamma (in immature muscle) or epsilon (in mature muscle) chains. The muscle heteropentamer composed of alpha-1, beta-1, delta, epsilon subunits interacts with the alpha-conotoxin ImII.

It is found in the postsynaptic cell membrane. Its subcellular location is the cell membrane. It catalyses the reaction K(+)(in) = K(+)(out). It carries out the reaction Na(+)(in) = Na(+)(out). Upon acetylcholine binding, the AChR responds by an extensive change in conformation that affects all subunits and leads to opening of an ion-conducting channel across the plasma membrane. The protein is Acetylcholine receptor subunit alpha (CHRNA1) of Felis catus (Cat).